The sequence spans 320 residues: Dermonecrotic toxin LarSicTox-alphaIB2a (320 aa).

An N-terminal signal peptide occupies residues 1-15; that stretch reads MSHSSTALLHPYVAA. A propeptide spanning residues 16–41 is cleaved from the precursor; the sequence is RATEKFAPIYFFCHPLQSAETDVAER. Residue His-52 is part of the active site. The Mg(2+) site is built by Glu-72 and Asp-74. The active-site Nucleophile is the His-88. Cystine bridges form between Cys-92–Cys-98 and Cys-94–Cys-237. Asp-132 lines the Mg(2+) pocket. N-linked (GlcNAc...) asparagine glycosylation occurs at Asn-297.

The protein belongs to the arthropod phospholipase D family. Class II subfamily. Requires Mg(2+) as cofactor. In terms of tissue distribution, expressed by the venom gland.

The protein resides in the secreted. The catalysed reaction is an N-(acyl)-sphingosylphosphocholine = an N-(acyl)-sphingosyl-1,3-cyclic phosphate + choline. It carries out the reaction an N-(acyl)-sphingosylphosphoethanolamine = an N-(acyl)-sphingosyl-1,3-cyclic phosphate + ethanolamine. The enzyme catalyses a 1-acyl-sn-glycero-3-phosphocholine = a 1-acyl-sn-glycero-2,3-cyclic phosphate + choline. It catalyses the reaction a 1-acyl-sn-glycero-3-phosphoethanolamine = a 1-acyl-sn-glycero-2,3-cyclic phosphate + ethanolamine. Its function is as follows. Dermonecrotic toxins cleave the phosphodiester linkage between the phosphate and headgroup of certain phospholipids (sphingolipid and lysolipid substrates), forming an alcohol (often choline) and a cyclic phosphate. This toxin acts on sphingomyelin (SM). It may also act on ceramide phosphoethanolamine (CPE), lysophosphatidylcholine (LPC) and lysophosphatidylethanolamine (LPE), but not on lysophosphatidylserine (LPS), and lysophosphatidylglycerol (LPG). It acts by transphosphatidylation, releasing exclusively cyclic phosphate products as second products. Induces dermonecrosis, hemolysis, increased vascular permeability, edema, inflammatory response, and platelet aggregation. The protein is Dermonecrotic toxin LarSicTox-alphaIB2a of Loxosceles arizonica (Arizona brown spider).